The following is a 262-amino-acid chain: Probable DNA polymerase sliding clamp 1 (262 aa).

The DNA-binding element occupies 67 to 86 (KCEHTYELGVNVLNMFKLLR).

The protein belongs to the PCNA family.

Its function is as follows. Sliding clamp subunit. Responsible for tethering the catalytic subunit of DNA polymerase to DNA during high-speed replication. The chain is Probable DNA polymerase sliding clamp 1 from Chlorella (PBCV-1).